The sequence spans 626 residues: Chaperone protein HtpG (626 aa).

The interval 1 to 341 (MRKKKFKAES…SEDLSLNISR (341 aa)) is a; substrate-binding. The tract at residues 342-552 (EMLQHDRQLK…DGEVTIEMEK (211 aa)) is b. Residues 553 to 626 (VLNAMPDSQQ…FTNDICKVMV (74 aa)) are c.

It belongs to the heat shock protein 90 family. As to quaternary structure, homodimer.

The protein localises to the cytoplasm. Functionally, molecular chaperone. Has ATPase activity. This is Chaperone protein HtpG from Bacillus velezensis (strain DSM 23117 / BGSC 10A6 / LMG 26770 / FZB42) (Bacillus amyloliquefaciens subsp. plantarum).